We begin with the raw amino-acid sequence, 1125 residues long: Probable inorganic carbon transporter subunit DabA (1125 aa).

Zn(2+) contacts are provided by Cys578, Asp580, His769, and Cys784. The disordered stretch occupies residues 1106–1125 (SDPRPPALVEPKQTETHHAA).

It belongs to the inorganic carbon transporter (TC 9.A.2) DabA family. In terms of assembly, forms a complex with DabB. It depends on Zn(2+) as a cofactor.

It localises to the cell inner membrane. Functionally, part of an energy-coupled inorganic carbon pump. The protein is Probable inorganic carbon transporter subunit DabA of Nitrosococcus oceani (strain ATCC 19707 / BCRC 17464 / JCM 30415 / NCIMB 11848 / C-107).